The chain runs to 902 residues: Zinc finger CCCH-type antiviral protein 1 (902 aa).

Ala2 carries the N-acetylalanine modification. The N-terminal domain stretch occupies residues 2–254; the sequence is ADPEVCCFIT…ARSKSRDRFF (253 aa). Residues 69-76 carry the Nuclear localization signal motif; it reads RARVCRRK. 4 consecutive C3H1-type zinc fingers follow at residues 73–86, 88–110, 150–172, and 169–193; these read CRRK…DNLH, CKLN…KYSH, CKSY…SRLH, and SRLH…SHNL. The interval 221-251 is disordered; the sequence is SKHMQKNPPGPRAPSSHRRNMAYRARSKSRD. A binding to EXOSC5 region spans residues 224–254; the sequence is MQKNPPGPRAPSSHRRNMAYRARSKSRDRFF. Residues 235–247 show a composition bias toward basic residues; it reads SSHRRNMAYRARS. Phosphoserine; by GSK3-beta occurs at positions 257, 263, 267, and 271. Polar residues predominate over residues 265–278; the sequence is SASAERSCTPSPDQ. Disordered stretches follow at residues 265–287 and 299–373; these read SASA…SLED and YLGS…GARR. Position 273 is a phosphothreonine (Thr273). Phosphoserine is present on residues Ser275 and Ser284. The Nuclear export signal motif lies at 285 to 292; sequence LEDAPVDD. Phosphoserine is present on residues Ser302, Ser327, Ser335, Ser355, Ser378, and Ser387. Polar residues-rich tracts occupy residues 310–336 and 344–369; these read SGSS…NGSQ and PGST…TNDQ. Residue Thr393 is modified to Phosphothreonine. Phosphoserine is present on residues Ser407, Ser469, Ser492, and Ser494. Residues 445–481 are disordered; sequence LNYKSTSSGHREISSPRIQDAGPASRDVQATGRIADD. Thr554 is subject to Phosphothreonine. A phosphoserine mark is found at Tyr572 and Ser590. In terms of domain architecture, WWE spans 594–681; that stretch reads SVTKPANSVF…ASKTQKDVIR (88 aa). Residues 716–902 enclose the PARP catalytic domain; the sequence is PQEDFCFLSS…YTEDKACVIS (187 aa).

The protein belongs to the ARTD/PARP family. Homodimer or homooligomer. Homooligomerization is essential for its antiviral activity. Interacts with EXOSC5. Interacts (via N-terminal domain) with DDX17 in an RNA-independent manner. Interacts with EXOSC3, EXOSC7, DCP2 and DCP1A. Interacts with PARN in an RNA-independent manner. Interacts with XRN1 in an RNA-dependent manner. Isoform 2 interacts (via zinc-fingers) with RIGI in an RNA-dependent manner. Interacts (via N-terminal domain) with DHX30 (via N-terminus) in an RNA-independent manner. In terms of processing, phosphorylation at Ser-275 is essential for sequential phosphorylation of Ser-271, Ser-267, Ser-263 and Ser-257 by GSK3-beta. Phosphorylation by GSK3-beta enhances its antiviral activity.

The protein localises to the cytoplasm. It localises to the nucleus. Its function is as follows. Antiviral protein which inhibits the replication of viruses by recruiting the cellular RNA degradation machineries to degrade the viral mRNAs. Binds to a ZAP-responsive element (ZRE) present in the target viral mRNA, recruits cellular poly(A)-specific ribonuclease PARN to remove the poly(A) tail, and the 3'-5' exoribonuclease complex exosome to degrade the RNA body from the 3'-end. It also recruits the decapping complex DCP1-DCP2 through RNA helicase p72 (DDX17) to remove the cap structure of the viral mRNA to initiate its degradation from the 5'-end. Its target viruses belong to families which include retroviridae: human immunodeficiency virus type 1 (HIV-1), moloney and murine leukemia virus (MoMLV) and xenotropic MuLV-related virus (XMRV), filoviridae: ebola virus (EBOV) and marburg virus (MARV), togaviridae: sindbis virus (SINV) and Ross river virus (RRV). Specifically targets the multiply spliced but not unspliced or singly spliced HIV-1 mRNAs for degradation. Isoform 1 is a more potent viral inhibitor than isoform 2. Isoform 2 acts as a positive regulator of RIGI signaling resulting in activation of the downstream effector IRF3 leading to the expression of type I IFNs and IFN stimulated genes (ISGs). The polypeptide is Zinc finger CCCH-type antiviral protein 1 (Homo sapiens (Human)).